Here is a 296-residue protein sequence, read N- to C-terminus: Light-independent protochlorophyllide reductase iron-sulfur ATP-binding protein (296 aa).

Residues 39–44 and Lys-68 contribute to the ATP site; that span reads GIGKST. Residue Ser-43 participates in Mg(2+) binding. Residues Cys-124 and Cys-158 each contribute to the [4Fe-4S] cluster site. 209-210 serves as a coordination point for ATP; sequence NR.

This sequence belongs to the NifH/BchL/ChlL family. Homodimer. Protochlorophyllide reductase is composed of three subunits; ChlL, ChlN and ChlB. Requires [4Fe-4S] cluster as cofactor.

The catalysed reaction is chlorophyllide a + oxidized 2[4Fe-4S]-[ferredoxin] + 2 ADP + 2 phosphate = protochlorophyllide a + reduced 2[4Fe-4S]-[ferredoxin] + 2 ATP + 2 H2O. Its pathway is porphyrin-containing compound metabolism; chlorophyll biosynthesis (light-independent). Functionally, component of the dark-operative protochlorophyllide reductase (DPOR) that uses Mg-ATP and reduced ferredoxin to reduce ring D of protochlorophyllide (Pchlide) to form chlorophyllide a (Chlide). This reaction is light-independent. The L component serves as a unique electron donor to the NB-component of the complex, and binds Mg-ATP. The chain is Light-independent protochlorophyllide reductase iron-sulfur ATP-binding protein from Synechococcus sp. (strain CC9605).